The sequence spans 303 residues: UDP-3-O-acyl-N-acetylglucosamine deacetylase (303 aa).

Zn(2+) contacts are provided by histidine 78, histidine 237, and aspartate 241. Histidine 264 functions as the Proton donor in the catalytic mechanism.

Belongs to the LpxC family. The cofactor is Zn(2+).

The catalysed reaction is a UDP-3-O-[(3R)-3-hydroxyacyl]-N-acetyl-alpha-D-glucosamine + H2O = a UDP-3-O-[(3R)-3-hydroxyacyl]-alpha-D-glucosamine + acetate. Its pathway is glycolipid biosynthesis; lipid IV(A) biosynthesis; lipid IV(A) from (3R)-3-hydroxytetradecanoyl-[acyl-carrier-protein] and UDP-N-acetyl-alpha-D-glucosamine: step 2/6. Its function is as follows. Catalyzes the hydrolysis of UDP-3-O-myristoyl-N-acetylglucosamine to form UDP-3-O-myristoylglucosamine and acetate, the committed step in lipid A biosynthesis. The protein is UDP-3-O-acyl-N-acetylglucosamine deacetylase of Xanthomonas oryzae pv. oryzae (strain MAFF 311018).